A 271-amino-acid polypeptide reads, in one-letter code: Neurexophilin-1 (271 aa).

The N-terminal stretch at 1–21 is a signal peptide; sequence MQAACWYVLLLLQPTIYLVTC. The segment at 22-97 is II; that stretch reads ANLTNGGKSE…WDWLRNSTDL (76 aa). 6 N-linked (GlcNAc...) asparagine glycosylation sites follow: Asn23, Asn68, Asn93, Asn146, Asn156, and Asn162. Positions 98–176 are III; that stretch reads QEPRPRAKRR…LVPPTKIVEF (79 aa). Positions 177 to 185 are IV (linker domain); it reads DLAQQTVID. The interval 186–271 is v (Cys-rich); that stretch reads AKDSKSFNCR…HSDTPYFPSG (86 aa).

The protein belongs to the neurexophilin family.

It is found in the secreted. In terms of biological role, may be signaling molecules that resemble neuropeptides and that act by binding to alpha-neurexins and possibly other receptors. The chain is Neurexophilin-1 (NXPH1) from Pongo abelii (Sumatran orangutan).